The sequence spans 206 residues: Small ribosomal subunit protein uS4 (206 aa).

Positions 96-156 (GRLDNVVYRM…EKAKKQSRVK (61 aa)) constitute an S4 RNA-binding domain.

It belongs to the universal ribosomal protein uS4 family. As to quaternary structure, part of the 30S ribosomal subunit. Contacts protein S5. The interaction surface between S4 and S5 is involved in control of translational fidelity.

Its function is as follows. One of the primary rRNA binding proteins, it binds directly to 16S rRNA where it nucleates assembly of the body of the 30S subunit. Functionally, with S5 and S12 plays an important role in translational accuracy. This chain is Small ribosomal subunit protein uS4, found in Yersinia enterocolitica serotype O:8 / biotype 1B (strain NCTC 13174 / 8081).